The primary structure comprises 513 residues: Transmembrane protein 151B (513 aa).

Positions 1–29 (MSPAAPVTESSAAEVHREQTDAPREPQRP) are disordered. A compositionally biased stretch (basic and acidic residues) spans 14–28 (EVHREQTDAPREPQR). 3 consecutive transmembrane segments (helical) span residues 46–66 (CLLL…CQVT), 93–113 (YIYI…VECW), and 274–294 (LPWY…LSWP). 3 N-linked (GlcNAc...) asparagine glycosylation sites follow: asparagine 366, asparagine 418, and asparagine 505.

This sequence belongs to the TMEM151 family.

It localises to the membrane. This chain is Transmembrane protein 151B (tmem151b), found in Danio rerio (Zebrafish).